The primary structure comprises 874 residues: Leucine--tRNA ligase (874 aa).

A 'HIGH' region motif is present at residues 47-57 (PYPSGKLHMGH). The short motif at 636–640 (KMSKS) is the 'KMSKS' region element. Position 639 (K639) interacts with ATP.

It belongs to the class-I aminoacyl-tRNA synthetase family.

It localises to the cytoplasm. It carries out the reaction tRNA(Leu) + L-leucine + ATP = L-leucyl-tRNA(Leu) + AMP + diphosphate. This chain is Leucine--tRNA ligase, found in Acinetobacter baumannii (strain AB307-0294).